A 286-amino-acid chain; its full sequence is tRNA dimethylallyltransferase (286 aa).

The segment at 18–21 (DSMQ) is interaction with substrate tRNA.

It belongs to the IPP transferase family. Monomer. It depends on Mg(2+) as a cofactor.

The catalysed reaction is adenosine(37) in tRNA + dimethylallyl diphosphate = N(6)-dimethylallyladenosine(37) in tRNA + diphosphate. Catalyzes the transfer of a dimethylallyl group onto the adenine at position 37 in tRNAs that read codons beginning with uridine, leading to the formation of N6-(dimethylallyl)adenosine (i(6)A). The polypeptide is tRNA dimethylallyltransferase (Tropheryma whipplei (strain TW08/27) (Whipple's bacillus)).